We begin with the raw amino-acid sequence, 114 residues long: MSSAAPAPSTHAAKSIRKNGKNWHDNKKPFRPNGGLTSYTKRAAARKEQEAIKEYEKELREEREAERQAHIQRIKERRAAKEEKERYEKMAEKMHRKRVERLKKREKRNKLLNS.

The span at 1–13 shows a compositional bias: low complexity; sequence MSSAAPAPSTHAA. Disordered stretches follow at residues 1 to 47 and 77 to 114; these read MSSA…AARK and RRAA…LLNS. Residues 40-101 are a coiled coil; it reads TKRAAARKEQ…EKMHRKRVER (62 aa). The segment covering 77 to 93 has biased composition (basic and acidic residues); it reads RRAAKEEKERYEKMAEK. Residues 94-114 show a composition bias toward basic residues; the sequence is MHRKRVERLKKREKRNKLLNS.

This sequence belongs to the CGR1 family.

Its subcellular location is the nucleus. The protein localises to the nucleolus. Involved in nucleolar integrity and required for processing of the pre-rRNA for the 60S ribosome subunit. The polypeptide is rRNA-processing protein cgrA (cgrA) (Emericella nidulans (strain FGSC A4 / ATCC 38163 / CBS 112.46 / NRRL 194 / M139) (Aspergillus nidulans)).